A 463-amino-acid polypeptide reads, in one-letter code: Steroidogenic factor 1 (463 aa).

The nuclear receptor DNA-binding region spans 10-85 (DELCPVCGDK…VGMRLEAVRA (76 aa)). The segment at 13-33 (CPVCGDKVSGYHYGLLTCESC) adopts an NR C4-type zinc-finger fold. N6-acetyllysine occurs at positions 34, 38, and 72. An NR C4-type zinc finger spans residues 49 to 73 (CTESQNCKIDKTQRKRCPYCRFQKC). Lys-119 participates in a covalent cross-link: Glycyl lysine isopeptide (Lys-Gly) (interchain with G-Cter in SUMO). The disordered stretch occupies residues 119–160 (KLETGPSMGPPPQTDYPLAPALHPGAKGLAPAPPAGPPGDYE). Residues 135-148 (PLAPALHPGAKGLA) are compositionally biased toward low complexity. Residue Lys-193 forms a Glycyl lysine isopeptide (Lys-Gly) (interchain with G-Cter in SUMO) linkage. A disordered region spans residues 197–216 (PEPYASPHEPAPPYGYPEPY). A Phosphoserine; by CDK7 modification is found at Ser-202. The segment covering 205–216 (EPAPPYGYPEPY) has biased composition (pro residues). An NR LBD domain is found at 224–461 (GVPELILKLL…NLLIEMLHAK (238 aa)). Positions 343, 438, and 442 each coordinate a 1,2-diacyl-sn-glycero-3-phosphocholine.

Belongs to the nuclear hormone receptor family. NR5 subfamily. Binds DNA as a monomer. Part of a complex consisting of SFPQ, NONO and NR5A1. Interacts with NR0B2, NCOA2 and PPARGC1A. Interacts with DGKQ and CDK7. Binds to and activated by HIPK3. Post-translationally, acetylation stimulates the transcriptional activity. In terms of processing, sumoylation reduces CDK7-mediated phosphorylation on Ser-202. Phosphorylated on Ser-202 by CDK7. This phosphorylation promotes transcriptional activity. As to expression, expressed in the pre-granulosa and Sertoli cells of the ovary and testis, respectively. In the testis it is also present in the interstitial cells. In the adult ovary it is expressed in the interstitial gland, and in the granulosa cells and theca interna of small to medium-sized antral follicles, but is not expressed in large antral follicles.

Its subcellular location is the nucleus. Its function is as follows. Transcriptional activator. Seems to be essential for sexual differentiation and formation of the primary steroidogenic tissues. Binds to the Ad4 site found in the promoter region of steroidogenic P450 genes such as CYP11A, CYP11B and CYP21B. Also regulates the AMH/Muellerian inhibiting substance gene as well as the AHCH and STAR genes. 5'-YCAAGGYC-3' and 5'-RRAGGTCA-3' are the consensus sequences for the recognition by NR5A1. The SFPQ-NONO-NR5A1 complex binds to the CYP17 promoter and regulates basal and cAMP-dependent transcriptional activity. Binds phosphatidylcholine and phospholipids with a phosphatidylinositol (PI) headgroup, in particular PI(3,4)P2 and PI(3,4,5)P3. Activated by the phosphorylation of NR5A1 by HIPK3 leading to increased steroidogenic gene expression upon cAMP signaling pathway stimulation. The sequence is that of Steroidogenic factor 1 (NR5A1) from Notamacropus eugenii (Tammar wallaby).